The chain runs to 170 residues: Acireductone dioxygenase (170 aa).

Fe(2+) is bound by residues H99, H101, E105, and H144. Ni(2+) contacts are provided by H99, H101, E105, and H144.

It belongs to the acireductone dioxygenase (ARD) family. As to quaternary structure, monomer. Fe(2+) serves as cofactor. It depends on Ni(2+) as a cofactor.

The catalysed reaction is 1,2-dihydroxy-5-(methylsulfanyl)pent-1-en-3-one + O2 = 3-(methylsulfanyl)propanoate + CO + formate + 2 H(+). It carries out the reaction 1,2-dihydroxy-5-(methylsulfanyl)pent-1-en-3-one + O2 = 4-methylsulfanyl-2-oxobutanoate + formate + 2 H(+). Its pathway is amino-acid biosynthesis; L-methionine biosynthesis via salvage pathway; L-methionine from S-methyl-5-thio-alpha-D-ribose 1-phosphate: step 5/6. Its function is as follows. Catalyzes 2 different reactions between oxygen and the acireductone 1,2-dihydroxy-3-keto-5-methylthiopentene (DHK-MTPene) depending upon the metal bound in the active site. Fe-containing acireductone dioxygenase (Fe-ARD) produces formate and 2-keto-4-methylthiobutyrate (KMTB), the alpha-ketoacid precursor of methionine in the methionine recycle pathway. Ni-containing acireductone dioxygenase (Ni-ARD) produces methylthiopropionate, carbon monoxide and formate, and does not lie on the methionine recycle pathway. The chain is Acireductone dioxygenase from Bacillus cereus (strain ATCC 10987 / NRS 248).